We begin with the raw amino-acid sequence, 105 residues long: UPF0148 protein PH0795 (105 aa).

Belongs to the UPF0148 family.

The sequence is that of UPF0148 protein PH0795 from Pyrococcus horikoshii (strain ATCC 700860 / DSM 12428 / JCM 9974 / NBRC 100139 / OT-3).